We begin with the raw amino-acid sequence, 200 residues long: Pyridoxine/pyridoxamine 5'-phosphate oxidase (200 aa).

FMN contacts are provided by residues 48–53 (RMVLLK), 63–64 (YT), Lys70, and Gln92. Residue Lys53 coordinates substrate. 3 residues coordinate substrate: Tyr110, Arg114, and Ser118. FMN-binding positions include 127–128 (QS) and Trp171. 177–179 (RLH) contacts substrate. Arg181 is an FMN binding site.

It belongs to the pyridoxamine 5'-phosphate oxidase family. In terms of assembly, homodimer. FMN is required as a cofactor.

It carries out the reaction pyridoxamine 5'-phosphate + O2 + H2O = pyridoxal 5'-phosphate + H2O2 + NH4(+). The enzyme catalyses pyridoxine 5'-phosphate + O2 = pyridoxal 5'-phosphate + H2O2. It participates in cofactor metabolism; pyridoxal 5'-phosphate salvage; pyridoxal 5'-phosphate from pyridoxamine 5'-phosphate: step 1/1. It functions in the pathway cofactor metabolism; pyridoxal 5'-phosphate salvage; pyridoxal 5'-phosphate from pyridoxine 5'-phosphate: step 1/1. Functionally, catalyzes the oxidation of either pyridoxine 5'-phosphate (PNP) or pyridoxamine 5'-phosphate (PMP) into pyridoxal 5'-phosphate (PLP). This Cereibacter sphaeroides (strain ATCC 17029 / ATH 2.4.9) (Rhodobacter sphaeroides) protein is Pyridoxine/pyridoxamine 5'-phosphate oxidase.